Reading from the N-terminus, the 457-residue chain is MDHLPIFCQLRDRDCLIVGGGDVAERKARLLLDAGARLTVNALAFIPQFTAWADAGMLTLVEGPFDESLLDTCWLAIAATDDDALNQRVSEAAEAHRIFCNVVDAPKAASFIMPSIIDRSPLMVAVSSGGTSPVLARLLREKLESLLPLHLGQVAKYAGQLRGRVKQQFATMGERRRFWEKLFVNDRLAQSLANNDQKAITETTEQLINEPLDHRGEVVLVGAGPGDAGLLTLKGLQQIQQADVVVYDRLVSDDIMNLVRRDADRVFVGKRAGYHCVPQEEINQILLREAQKGKRVVRLKGGDPFIFGRGGEELETLCNAGIPFSVVPGITAASGCSAYSGIPLTHRDYAQSVRLITGHLKTGGELDWENLAAEKQTLVFYMGLNQAATIQQKLIEHGMPGEMPVAIVENGTAVTQRVIDGTLTQLGELAQQMNSPSLIIIGRVVGLRDKLNWFSNH.

The tract at residues Met-1–Thr-204 is precorrin-2 dehydrogenase /sirohydrochlorin ferrochelatase. NAD(+) is bound by residues Asp-22–Val-23 and Leu-43–Ala-44. Ser-128 is modified (phosphoserine). Residues Gly-216–His-457 form a uroporphyrinogen-III C-methyltransferase region. An S-adenosyl-L-methionine-binding site is contributed by Pro-225. Catalysis depends on Asp-248, which acts as the Proton acceptor. Residue Lys-270 is the Proton donor of the active site. Residues Gly-301–Asp-303, Ile-306, Thr-331–Ala-332, Met-382, and Gly-411 contribute to the S-adenosyl-L-methionine site.

It in the N-terminal section; belongs to the precorrin-2 dehydrogenase / sirohydrochlorin ferrochelatase family. The protein in the C-terminal section; belongs to the precorrin methyltransferase family.

It carries out the reaction uroporphyrinogen III + 2 S-adenosyl-L-methionine = precorrin-2 + 2 S-adenosyl-L-homocysteine + H(+). The catalysed reaction is precorrin-2 + NAD(+) = sirohydrochlorin + NADH + 2 H(+). The enzyme catalyses siroheme + 2 H(+) = sirohydrochlorin + Fe(2+). Its pathway is cofactor biosynthesis; adenosylcobalamin biosynthesis; precorrin-2 from uroporphyrinogen III: step 1/1. It participates in cofactor biosynthesis; adenosylcobalamin biosynthesis; sirohydrochlorin from precorrin-2: step 1/1. It functions in the pathway porphyrin-containing compound metabolism; siroheme biosynthesis; precorrin-2 from uroporphyrinogen III: step 1/1. The protein operates within porphyrin-containing compound metabolism; siroheme biosynthesis; siroheme from sirohydrochlorin: step 1/1. Its pathway is porphyrin-containing compound metabolism; siroheme biosynthesis; sirohydrochlorin from precorrin-2: step 1/1. Its function is as follows. Multifunctional enzyme that catalyzes the SAM-dependent methylations of uroporphyrinogen III at position C-2 and C-7 to form precorrin-2 via precorrin-1. Then it catalyzes the NAD-dependent ring dehydrogenation of precorrin-2 to yield sirohydrochlorin. Finally, it catalyzes the ferrochelation of sirohydrochlorin to yield siroheme. In Escherichia coli O17:K52:H18 (strain UMN026 / ExPEC), this protein is Siroheme synthase.